A 359-amino-acid polypeptide reads, in one-letter code: uncharacterized protein (359 aa).

Transmembrane regions (helical) follow at residues 4 to 24, 36 to 56, 68 to 88, 94 to 114, 129 to 149, and 155 to 175; these read ELFVNLTILITFNYLFTHLFK, FQAVKGLACGLLGVILMVFGF, IPIMIAALYGGWVSTATALAM, LLITMNTSALYSVIIICIAAI, HAFYLLIITNSLISFSFYFLI, and ELHLYFWIISIAGGMLSLYII. One can recognise a GGDEF domain in the interval 223-357; it reads FQFALIYMDI…GRNRVCFSEK (135 aa).

The protein localises to the cell membrane. This is an uncharacterized protein from Bacillus subtilis (strain 168).